Here is a 154-residue protein sequence, read N- to C-terminus: Transcriptional repressor NrdR (154 aa).

A zinc finger spans residues 3–34; that stretch reads CPFCSAHDTKVIDSRLVAEGDQVRRRRECQAC. The region spanning 49–139 is the ATP-cone domain; the sequence is PRVIKQDGSR…VYRRFQDLNE (91 aa).

This sequence belongs to the NrdR family. Requires Zn(2+) as cofactor.

Negatively regulates transcription of bacterial ribonucleotide reductase nrd genes and operons by binding to NrdR-boxes. In Azotobacter vinelandii (strain DJ / ATCC BAA-1303), this protein is Transcriptional repressor NrdR.